The primary structure comprises 403 residues: MTTIEESLALIGRGTEEILKLDQLQARLATGKPLRVKAGFDPTAPDLHLGHTVLLNKMRQFQQLGHQVIFLIGDFTGMIGDPSGKNATRKPLSREDVLANARTYEEQVFKILDRERTEVRFNSEWFGQMSAADMIKLSAQHTVARMLERDDFAKRFGSQQPIAIHEFLYPLVQGYDSVALKADVELGGTDQKFNLLMGRGLQEHYGQAPQIVLTMPLLEGLDGVAKMSKSLGNYIGINEPAIDIVTKTMKIGDALTWRWIDLLSFDISMAEAARLKEEVASGELHPREVKLRLARELATRFHDAATAEQAIAGWHAVVTGQGDTGLLPLQEVVVPAEGLRLAGLLTAAGLTPSNSEATRKLKERAVKIDGEVVEDPGRVFTQGFEGVIQVGKRNFARVSLVTG.

Residues 42–51 (PTAPDLHLGH) carry the 'HIGH' region motif. The 'KMSKS' region signature appears at 226–230 (KMSKS). An ATP-binding site is contributed by lysine 229. Residues 339-400 (LRLAGLLTAA…GKRNFARVSL (62 aa)) form the S4 RNA-binding domain.

Belongs to the class-I aminoacyl-tRNA synthetase family. TyrS type 2 subfamily. Homodimer.

The protein resides in the cytoplasm. The enzyme catalyses tRNA(Tyr) + L-tyrosine + ATP = L-tyrosyl-tRNA(Tyr) + AMP + diphosphate + H(+). In terms of biological role, catalyzes the attachment of tyrosine to tRNA(Tyr) in a two-step reaction: tyrosine is first activated by ATP to form Tyr-AMP and then transferred to the acceptor end of tRNA(Tyr). This is Tyrosine--tRNA ligase from Xanthomonas axonopodis pv. citri (strain 306).